The chain runs to 220 residues: MADS-box protein AGL24 (220 aa).

The region spanning 1 to 61 (MAREKIRIKK…GKLFEFSSSR (61 aa)) is the MADS-box domain. The region spanning 87–177 (LRLENCNLSR…RDKLETLERA (91 aa)) is the K-box domain. The segment covering 190 to 200 (SVTTNVSSYDS) has biased composition (polar residues). Residues 190-220 (SVTTNVSSYDSGTPLEDDSDTSLKLGLPSWE) form a disordered region.

As to quaternary structure, interacts with IMK3/MRLK. Forms a homodimer and heterodimer with SOC1, AP1 and SVP through MADS-box domain. Interacts with the SEU-LUG corepressor complex when complexed to AP1. Interacts with AGL15 and AGL16. Phosphorylated by IMK3. Induced by vernalization. As to expression, mostly expressed in shoot apical meristems, including floral meristems. Also detected in stems, seedlings, leaves, flowers and siliques, and, to a lower extent, in roots.

Its subcellular location is the nucleus. The protein localises to the cytoplasm. Functionally, transcription activator that mediates floral transition in response to vernalization. Promotes inflorescence fate in apical meristems. Acts in a dosage-dependent manner. Probably involved in the transduction of RLK-mediated signaling (e.g. IMK3 pathway). Together with AP1 and SVP, controls the identity of the floral meristem and regulates expression of class B, C and E genes. When associated with SOC1, mediates effect of gibberellins on flowering under short-day conditions, and regulates the expression of LEAFY (LFY), which links floral induction and floral development. Confers inflorescence characteristics to floral primordia and early flowering. The protein is MADS-box protein AGL24 (AGL24) of Arabidopsis thaliana (Mouse-ear cress).